The chain runs to 200 residues: MSRILVLYHSLWGHVEQMAEAEAEGARSVSGIQVDVRRVPETMPAETLAAVHAKTHQAAPEAHPDDLANYDGIIFGTPTRFGNMTGQMRNFLDRTGNLWQEGRLVGKVGSVFVSTATQHGGQETTLTSFHTFLFHQGMLVVGVPYSCTELMNMDEISGGTPYGASTMSKGDGSRQPSANELTIARFQGRHVAEITRKLFG.

The Flavodoxin-like domain occupies 4-191 (ILVLYHSLWG…TIARFQGRHV (188 aa)). FMN-binding positions include 10–15 (SLWGHV) and 79–81 (TRF). Residue Trp-12 participates in NAD(+) binding. Substrate is bound at residue Trp-99. FMN is bound by residues 114-120 (STATQHG) and His-135.

This sequence belongs to the WrbA family. Requires FMN as cofactor.

It carries out the reaction a quinone + NADH + H(+) = a quinol + NAD(+). It catalyses the reaction a quinone + NADPH + H(+) = a quinol + NADP(+). The chain is NAD(P)H dehydrogenase (quinone) from Acidithiobacillus ferrooxidans (strain ATCC 53993 / BNL-5-31) (Leptospirillum ferrooxidans (ATCC 53993)).